Reading from the N-terminus, the 265-residue chain is Glutamate racemase (265 aa).

Substrate contacts are provided by residues 9–10 and 41–42; these read DS and YG. Cysteine 73 (proton donor/acceptor) is an active-site residue. 74–75 is a binding site for substrate; it reads NT. Cysteine 180 serves as the catalytic Proton donor/acceptor. Position 181–182 (181–182) interacts with substrate; the sequence is TH.

This sequence belongs to the aspartate/glutamate racemases family.

It catalyses the reaction L-glutamate = D-glutamate. It functions in the pathway cell wall biogenesis; peptidoglycan biosynthesis. Functionally, provides the (R)-glutamate required for cell wall biosynthesis. This is Glutamate racemase from Aliivibrio salmonicida (strain LFI1238) (Vibrio salmonicida (strain LFI1238)).